The chain runs to 357 residues: Sorbitol dehydrogenase 1 (357 aa).

Cys-43 serves as a coordination point for Zn(2+). Residue Tyr-49 participates in substrate binding. His-68 and Glu-69 together coordinate Zn(2+). Residue Glu-154 participates in substrate binding. NAD(+) is bound by residues Asp-202, Lys-207, 275–277 (VGM), and 299–301 (CFR). 2 residues coordinate substrate: Arg-301 and Tyr-302.

This sequence belongs to the zinc-containing alcohol dehydrogenase family. Homotetramer. It depends on Zn(2+) as a cofactor.

The enzyme catalyses keto-D-fructose + NADH + H(+) = D-sorbitol + NAD(+). It carries out the reaction xylitol + NAD(+) = D-xylulose + NADH + H(+). Polyol dehydrogenase that catalyzes the reversible NAD(+)-dependent oxidation of various sugar alcohols. Is active with D-sorbitol (D-glucitol) and xylitol as substrates, leading to the C2-oxidized product D-fructose and D-xylulose, respectively. Is likely involved in the utilization of D-sorbitol as a sole carbon source for growth. Has no activity on mannitol and primary alcohols such as ethanol. The sequence is that of Sorbitol dehydrogenase 1 (SOR1) from Saccharomyces cerevisiae (strain ATCC 204508 / S288c) (Baker's yeast).